A 217-amino-acid polypeptide reads, in one-letter code: MNQTLLSSFGTPFERVELALDALREGRGVMVLDDEDRENEGDMIFPAEIMTVEQMALTIRHGSGIVCLCITEDRRKQLDLPMMVENNTSAYGTGFTVTIEAAEGVTTGVSAADRVTTVRAAIKDGAKPSDLNRPGHVFPLRAQAGGVLTRGGHTEATIDLMTLAGFKPAGVLCELTNDDGTMARAPECIAFAGQHNMAVVTIEDLVAYRQAHERKAS.

Residues Arg37–Glu38, Asp42, Arg150–Thr154, and Glu174 each bind D-ribulose 5-phosphate. Glu38 is a Mg(2+) binding site. His153 lines the Mg(2+) pocket.

Belongs to the DHBP synthase family. As to quaternary structure, homodimer. It depends on Mg(2+) as a cofactor. Mn(2+) is required as a cofactor.

It carries out the reaction D-ribulose 5-phosphate = (2S)-2-hydroxy-3-oxobutyl phosphate + formate + H(+). Its pathway is cofactor biosynthesis; riboflavin biosynthesis; 2-hydroxy-3-oxobutyl phosphate from D-ribulose 5-phosphate: step 1/1. In terms of biological role, catalyzes the conversion of D-ribulose 5-phosphate to formate and 3,4-dihydroxy-2-butanone 4-phosphate. The polypeptide is 3,4-dihydroxy-2-butanone 4-phosphate synthase (Salmonella paratyphi A (strain ATCC 9150 / SARB42)).